The sequence spans 431 residues: Phosphoribosylamine--glycine ligase (431 aa).

In terms of domain architecture, ATP-grasp spans 109–316 (KDFLARHGIP…LVDLVEAAID (208 aa)). Position 135–196 (135–196 (VREKGAPIVV…EEFLDGEEAS (62 aa))) interacts with ATP. 2 residues coordinate Mg(2+): Glu286 and Asn288.

It belongs to the GARS family. Requires Mg(2+) as cofactor. Mn(2+) serves as cofactor.

It catalyses the reaction 5-phospho-beta-D-ribosylamine + glycine + ATP = N(1)-(5-phospho-beta-D-ribosyl)glycinamide + ADP + phosphate + H(+). Its pathway is purine metabolism; IMP biosynthesis via de novo pathway; N(1)-(5-phospho-D-ribosyl)glycinamide from 5-phospho-alpha-D-ribose 1-diphosphate: step 2/2. The protein is Phosphoribosylamine--glycine ligase of Xanthomonas campestris pv. campestris (strain ATCC 33913 / DSM 3586 / NCPPB 528 / LMG 568 / P 25).